Reading from the N-terminus, the 126-residue chain is Small ribosomal subunit protein uS13 (126 aa).

Residues 98-126 form a disordered region; the sequence is PVRGQSTKNNARTRKGRKKTVANKKKATK. Residues 108 to 126 are compositionally biased toward basic residues; that stretch reads ARTRKGRKKTVANKKKATK.

Belongs to the universal ribosomal protein uS13 family. In terms of assembly, part of the 30S ribosomal subunit. Forms a loose heterodimer with protein S19. Forms two bridges to the 50S subunit in the 70S ribosome.

Its function is as follows. Located at the top of the head of the 30S subunit, it contacts several helices of the 16S rRNA. In the 70S ribosome it contacts the 23S rRNA (bridge B1a) and protein L5 of the 50S subunit (bridge B1b), connecting the 2 subunits; these bridges are implicated in subunit movement. Contacts the tRNAs in the A and P-sites. This Bacteroides fragilis (strain ATCC 25285 / DSM 2151 / CCUG 4856 / JCM 11019 / LMG 10263 / NCTC 9343 / Onslow / VPI 2553 / EN-2) protein is Small ribosomal subunit protein uS13.